A 557-amino-acid chain; its full sequence is Urocanate hydratase (557 aa).

NAD(+)-binding positions include 53 to 54 (GG), glutamine 131, 177 to 179 (GMG), aspartate 197, arginine 202, 243 to 244 (NA), 264 to 268 (QTSAH), 274 to 275 (YL), and tyrosine 323. Cysteine 411 is an active-site residue. Residue glycine 493 participates in NAD(+) binding.

It belongs to the urocanase family. It depends on NAD(+) as a cofactor.

Its subcellular location is the cytoplasm. The catalysed reaction is 4-imidazolone-5-propanoate = trans-urocanate + H2O. It functions in the pathway amino-acid degradation; L-histidine degradation into L-glutamate; N-formimidoyl-L-glutamate from L-histidine: step 2/3. In terms of biological role, catalyzes the conversion of urocanate to 4-imidazolone-5-propionate. The sequence is that of Urocanate hydratase from Hahella chejuensis (strain KCTC 2396).